A 389-amino-acid polypeptide reads, in one-letter code: Trans-2-enoyl-CoA reductase [NADH] (389 aa).

NAD(+) is bound by residues 47-52 (GASTGY), 73-74 (FE), 110-111 (DA), and 138-139 (LA). Position 224 (Tyr-224) interacts with substrate. Residue Tyr-234 is the Proton donor of the active site. NAD(+)-binding positions include Lys-243 and 272–274 (LVT).

The protein belongs to the TER reductase family. In terms of assembly, monomer.

It carries out the reaction a 2,3-saturated acyl-CoA + NAD(+) = a (2E)-enoyl-CoA + NADH + H(+). The protein operates within lipid metabolism; fatty acid biosynthesis. Its function is as follows. Involved in the fatty acid synthesis (FAS II). Catalyzes the reduction of a carbon-carbon double bond in an enoyl moiety that is covalently linked to a coenzyme A (CoA). In Clostridium perfringens (strain 13 / Type A), this protein is Trans-2-enoyl-CoA reductase [NADH].